The following is a 53-amino-acid chain: uncharacterized protein (53 aa).

Belongs to the ycf15 family.

The protein localises to the plastid. Its subcellular location is the chloroplast. This is an uncharacterized protein from Helianthus annuus (Common sunflower).